Reading from the N-terminus, the 840-residue chain is Sorting nexin-25 (840 aa).

The 164-residue stretch at 1-164 folds into the PXA domain; that stretch reads MDKALKEVFD…MLLAQLAYRE (164 aa). The region spanning 287-401 is the RGS domain; sequence QFEDILANTF…IVSDLYEKLL (115 aa). Residues 434–499 are a coiled coil; it reads TNQINEQASF…RTDLQLHMAR (66 aa). The PX domain occupies 508–628; that stretch reads GMWKASITSG…AFLSPSPDYL (121 aa). Ser-665 carries the post-translational modification Phosphoserine.

It belongs to the sorting nexin family.

It is found in the endosome membrane. Functionally, may be involved in several stages of intracellular trafficking. The sequence is that of Sorting nexin-25 (SNX25) from Homo sapiens (Human).